Reading from the N-terminus, the 180-residue chain is Large ribosomal subunit protein uL6 (180 aa).

This sequence belongs to the universal ribosomal protein uL6 family. In terms of assembly, part of the 50S ribosomal subunit.

Its function is as follows. This protein binds to the 23S rRNA, and is important in its secondary structure. It is located near the subunit interface in the base of the L7/L12 stalk, and near the tRNA binding site of the peptidyltransferase center. In Clostridium botulinum (strain Alaska E43 / Type E3), this protein is Large ribosomal subunit protein uL6.